A 78-amino-acid polypeptide reads, in one-letter code: Large ribosomal subunit protein uL10 (78 aa).

Residues 40–50 (AAAAAATAPAA) are compositionally biased toward low complexity. The interval 40-78 (AAAAAATAPAAETKKEEKKEEKKEETEESDDDIGLSLFH) is disordered. Basic and acidic residues predominate over residues 51–64 (ETKKEEKKEEKKEE).

The protein belongs to the universal ribosomal protein uL10 family. As to quaternary structure, P0 forms a pentameric complex by interaction with dimers of P1 and P2.

It is found in the nucleus. Its subcellular location is the cytoplasm. Its function is as follows. Ribosomal protein P0 is the functional equivalent of E.coli protein L10. The chain is Large ribosomal subunit protein uL10 from Culicoides nubeculosus (Biting midge).